Consider the following 337-residue polypeptide: uncharacterized protein (337 aa).

The Cytoplasmic portion of the chain corresponds to 1–10 (MKLKINIRPN). The chain crosses the membrane as a helical span at residues 11–31 (EIIFLICIVVIFSFSYTLTYF). The Extracellular portion of the chain corresponds to 32–100 (DSPIFKEHYI…LEKLFSFSDN (69 aa)). The chain crosses the membrane as a helical span at residues 101–121 (ILIVLIIVQVIVGFLIFLLSV). Topologically, residues 122–197 (EKLSKCNYQL…KILIIKKKRD (76 aa)) are cytoplasmic. Low complexity predominate over residues 148 to 167 (NNNNEDINNNNNNNNNNNNK). The interval 148-179 (NNNNEDINNNNNNNNNNNNKNKNDERNNEEIE) is disordered. A helical transmembrane segment spans residues 198 to 218 (ILLAIIIFFLVLLGVLTIIYV). Over 219–285 (SFIPLNIRKA…SWSLDSGLFN (67 aa)) the chain is Extracellular. Residues 286–306 (VKIVFFSTILIEFLTGCLILL) form a helical membrane-spanning segment. The Cytoplasmic portion of the chain corresponds to 307-337 (MKFKKDPNIVPLTKPSIASPTQIPHLFCIAK).

It is found in the membrane. This is an uncharacterized protein from Dictyostelium discoideum (Social amoeba).